The chain runs to 2415 residues: Bradyzoite-formation deficient protein 1 (2415 aa).

3 disordered regions span residues 369–392 (WNKP…PEET), 418–481 (HLTS…PYTR), and 761–845 (DGCG…QDTQ). Positions 419-429 (LTSRQHPNPRP) are enriched in basic residues. Basic and acidic residues predominate over residues 430-443 (RMKEEHCGREREVL). Composition is skewed to polar residues over residues 444–460 (SSEQ…TPAS) and 832–843 (PRTTSSSSYGQD). The 48-residue stretch at 921 to 968 (WSAEEDASLAELVSRKGFKWALISSQLTGAFGIPRTGKQCRERWFNHV) folds into the Myb-like domain. The HTH myb-type domain maps to 969–1023 (NPEVKKGDWSAEEDAMILMLQNELGNRWATIAKKLRGRTENAVKNRFISLSNARL). A DNA-binding region (H-T-H motif) is located at residues 996–1019 (WATIAKKLRGRTENAVKNRFISLS). Disordered stretches follow at residues 1027-1050 (RPKR…KSSG), 1098-1127 (VSRP…LKNT), 1206-1270 (NDER…NGLD), 1319-1343 (PACD…AQRQ), 1501-1521 (QLWT…QQHE), 1905-1932 (VSRD…TSQS), 1959-2013 (RVRW…GSTA), and 2161-2222 (GTDA…EMQD). The segment covering 1036 to 1050 (DCFSNRRTGSGKSSG) has biased composition (polar residues). Basic and acidic residues predominate over residues 1227–1237 (AHEHADIARSD). 2 stretches are compositionally biased toward polar residues: residues 1327–1343 (PQNS…AQRQ) and 1501–1520 (QLWT…NQQH). The span at 1974 to 1985 (SVSSGASNSATT) shows a compositional bias: polar residues. Over residues 2181-2197 (QAHRRDGHDMQRVQRCD) the composition is skewed to basic and acidic residues.

It localises to the nucleus. Master transcription factor that controls the differentiation of acute-stage tachyzoite parasites into chronic-stage bradyzoites, which form intracellular cysts resistant to immune clearance and existing therapies. Sufficient to drive differentiation into bradyzoite stage. Following translation in response to stress conditions, binds to the promoter of many chronic stage-specific genes and promotes their expression, thereby driving differentiation into bradyzoites. The chain is Bradyzoite-formation deficient protein 1 from Toxoplasma gondii (strain ATCC 50611 / Me49).